We begin with the raw amino-acid sequence, 232 residues long: 7-cyano-7-deazaguanine synthase (232 aa).

8 to 18 is an ATP binding site; the sequence is FSGGQDSTTCL. Cysteine 189, cysteine 198, cysteine 201, and cysteine 204 together coordinate Zn(2+).

Belongs to the QueC family. Requires Zn(2+) as cofactor.

It carries out the reaction 7-carboxy-7-deazaguanine + NH4(+) + ATP = 7-cyano-7-deazaguanine + ADP + phosphate + H2O + H(+). The protein operates within purine metabolism; 7-cyano-7-deazaguanine biosynthesis. Its function is as follows. Catalyzes the ATP-dependent conversion of 7-carboxy-7-deazaguanine (CDG) to 7-cyano-7-deazaguanine (preQ(0)). The protein is 7-cyano-7-deazaguanine synthase of Proteus mirabilis (strain HI4320).